The sequence spans 353 residues: Probable dual-specificity RNA methyltransferase RlmN (353 aa).

Glu90 acts as the Proton acceptor in catalysis. One can recognise a Radical SAM core domain in the interval 96–326 (YKHGNSICIS…VTTRREMGSD (231 aa)). A disulfide bridge links Cys103 with Cys331. [4Fe-4S] cluster contacts are provided by Cys110, Cys114, and Cys117. Residues 157–158 (GE), Ser189, 212–214 (SLH), and Asn288 contribute to the S-adenosyl-L-methionine site. The S-methylcysteine intermediate role is filled by Cys331.

This sequence belongs to the radical SAM superfamily. RlmN family. Requires [4Fe-4S] cluster as cofactor.

The protein localises to the cytoplasm. It catalyses the reaction adenosine(2503) in 23S rRNA + 2 reduced [2Fe-2S]-[ferredoxin] + 2 S-adenosyl-L-methionine = 2-methyladenosine(2503) in 23S rRNA + 5'-deoxyadenosine + L-methionine + 2 oxidized [2Fe-2S]-[ferredoxin] + S-adenosyl-L-homocysteine. It carries out the reaction adenosine(37) in tRNA + 2 reduced [2Fe-2S]-[ferredoxin] + 2 S-adenosyl-L-methionine = 2-methyladenosine(37) in tRNA + 5'-deoxyadenosine + L-methionine + 2 oxidized [2Fe-2S]-[ferredoxin] + S-adenosyl-L-homocysteine. Functionally, specifically methylates position 2 of adenine 2503 in 23S rRNA and position 2 of adenine 37 in tRNAs. This chain is Probable dual-specificity RNA methyltransferase RlmN, found in Clostridium beijerinckii (strain ATCC 51743 / NCIMB 8052) (Clostridium acetobutylicum).